The chain runs to 78 residues: Large ribosomal subunit protein bL28 (78 aa).

Belongs to the bacterial ribosomal protein bL28 family.

The protein is Large ribosomal subunit protein bL28 of Azoarcus sp. (strain BH72).